The sequence spans 397 residues: Acylalkylpyrone synthase csyB (397 aa).

CoA is bound by residues lysine 50 and 50 to 57 (KMLEINRK). The Nucleophile role is filled by cysteine 155. 214 to 215 (GD) is a substrate binding site. CoA is bound by residues isoleucine 267, glycine 312, 312 to 315 (GGYA), tyrosine 314, and alanine 315. Histidine 377 is an active-site residue.

This sequence belongs to the thiolase-like superfamily. Chalcone/stilbene synthases family. Homodimer.

Functionally, acylalkylpyrone synthase that catalyzes not only the polyketide chain elongation but also the one-pot condensation of two beta-ketoacyl units to produce the 3-acyl-4-hydroxy-6-alkyl-alpha-pyrone (AcAP) scaffold, a precursor of csypyrone B. The enzyme reaction is initiated by the loading of acetoacetyl-CoA onto Cys-155, and subsequent thioester bond cleavage by the nucleophilic water generates the beta-keto acid intermediate, which is placed within a pocket. The second beta-ketoacyl unit is then produced by polyketide chain elongation of fatty acyl-CoA with one molecule of malonyl-CoA, and the condensation with the beta-ketoacid generates the final products. Csypyrone B1 is the major product and contains a propanoic acid side-chain, whereas csypyrones B2 and B3 are minor compounds that contain butyric or pentanoic acid side-chains, respectively. The sequence is that of Acylalkylpyrone synthase csyB from Aspergillus oryzae (strain ATCC 42149 / RIB 40) (Yellow koji mold).